Consider the following 574-residue polypeptide: Streptolysin O (574 aa).

An N-terminal signal peptide occupies residues 1 to 36; it reads MKDMSNKKIFKKYSRVAGLLTAALIVGNLVTANADS. Positions 37-52 are enriched in low complexity; that stretch reads NKQNTANTETTTTNEQ. Disordered stretches follow at residues 37 to 64 and 84 to 111; these read NKQNTANTETTTTNEQPKPESSELTTEK and KEMPLESAEKEEKKSEDNKKSEEDHTEE. A compositionally biased stretch (basic and acidic residues) spans 53-64; it reads PKPESSELTTEK. Transmembrane regions (beta stranded) follow at residues 263 to 276, 283 to 292, 361 to 370, and 378 to 390; these read KSQIEAALNVNSKI, IDFKSISKGE, SNDVEAAFSA, and KTNGKYSDILENS. The Conserved undecapeptide motif lies at 532-542; sequence ECTGLAWEWWR. The Cholesterol binding signature appears at 564 to 565; it reads TL.

The protein belongs to the cholesterol-dependent cytolysin family. In terms of assembly, homooligomeric pore complex of 35 to 50 subunits; when inserted in the host membrane.

The protein resides in the secreted. The protein localises to the host cell membrane. Its function is as follows. A cholesterol-dependent toxin that causes cytolysis by forming pores in cholesterol containing host membranes. After binding to target membranes, the protein undergoes a major conformation change, leading to its insertion in the host membrane and formation of an oligomeric pore complex. Cholesterol is required for binding to host membranes, membrane insertion and pore formation; cholesterol binding is mediated by a Thr-Leu pair in the C-terminus. Can be reversibly inactivated by oxidation. The chain is Streptolysin O (slo) from Streptococcus canis.